The following is a 639-amino-acid chain: Probable potassium transport system protein Kup 1 (639 aa).

Transmembrane regions (helical) follow at residues 27-47 (AILG…LYAF), 64-84 (VIGL…FKYI), 115-135 (VLIV…MITP), 151-171 (PAMD…LFAI), 182-202 (FFGP…LIHI), 225-245 (GFYG…AEAL), 261-281 (WFCL…ALVL), 293-313 (LMFP…ATII), 351-371 (IYLP…VLTF), 377-397 (LATA…LMFF), 408-428 (IWLA…FLGA), and 430-450 (LLKI…FTVI).

Belongs to the HAK/KUP transporter (TC 2.A.72) family.

It localises to the cell inner membrane. The catalysed reaction is K(+)(in) + H(+)(in) = K(+)(out) + H(+)(out). Transport of potassium into the cell. Likely operates as a K(+):H(+) symporter. This Agrobacterium fabrum (strain C58 / ATCC 33970) (Agrobacterium tumefaciens (strain C58)) protein is Probable potassium transport system protein Kup 1.